We begin with the raw amino-acid sequence, 622 residues long: MSTDNKQSLPAITLAAIGVVYGDIGTSPLYTLRECLSGQFGFGVERDAVFGFLSLIFWLLIFVVSIKYLTFVMRADNAGEGGILTLMSLAGRNTSARTTSMLVIMGLIGGSFFYGEVVITPAISVMSAIEGLEIVAPQLDTWIVPLSIIVLTLLFMIQKHGTGMVGKLFAPIMLTWFLILAVLGLRSIIANPEVLHALNPVWAVRFFLEYKTVSFIALGAVVLSITGVEALYADMGHFGKFPIRLAWFTVVLPSLVLNYFGQGALLLKHPEAIKNPFFLLAPDWALIPLLILAALATVIASQAVISGVFSLTRQAVRLGYLSPMRIIHTSEMESGQIYIPFVNWLLYFAVVVVIVSFEHSSNLAAAYGIAVTGTMVLTSILSTTVARKNWHWNKYFVALILIAFLCVDIPLFSANLDKLLSGGWLPLSLGLIMFTIMTTWKSERFRLLRRMHEHGNSLEAMIASLEKSPPVRVPGTAVYMSRALSVIPFALLHNLKHNKVLHERVILLTLRTEDAPYVHNVRRVQIEQLSPTFWRVVASYGWRETLNVEEVFHRCGLEGLSCRMMETSFFMSHESLIVGKRPWYLRLRGKLYLLLQRNALRAPDQFEIPPNRVIELGTQVEI.

Transmembrane regions (helical) follow at residues 9 to 29, 49 to 69, 103 to 123, 137 to 157, 165 to 185, 213 to 233, 247 to 267, 276 to 296, 337 to 357, 363 to 383, 396 to 416, and 419 to 439; these read LPAITLAAIGVVYGDIGTSPL, VFGFLSLIFWLLIFVVSIKYL, VIMGLIGGSFFYGEVVITPAI, PQLDTWIVPLSIIVLTLLFMI, VGKLFAPIMLTWFLILAVLGL, VSFIALGAVVLSITGVEALYA, WFTVVLPSLVLNYFGQGALLL, PFFLLAPDWALIPLLILAALA, IYIPFVNWLLYFAVVVVIVSF, LAAAYGIAVTGTMVLTSILST, FVALILIAFLCVDIPLFSANL, and LLSGGWLPLSLGLIMFTIMTT.

Belongs to the HAK/KUP transporter (TC 2.A.72) family.

Its subcellular location is the cell inner membrane. It catalyses the reaction K(+)(in) + H(+)(in) = K(+)(out) + H(+)(out). In terms of biological role, responsible for the low-affinity transport of potassium into the cell. Likely operates as a K(+):H(+) symporter. In Salmonella typhi, this protein is Low affinity potassium transport system protein Kup.